The sequence spans 334 residues: MAEFHFFCIDAHTCGNPVRVVTGGSIPFLQGNSMSEKRQHFLREFDWIRKGLMFEPRGHDMMSGSILYPPTDPANDAGVLFIETSGCLPMCGHGTIGTVTVAIEQNLIRPKTPGVLNLEVPAGLVRAEYQQEGKKVTSVKITNIKSYLAAEKLTVDCPDLGLLTVDVAYGGNFYAIVDPQPNFPGLEHYKAEQLIGWARVMRERMNEQYTFVHPENPTINGLSHILWTGKPIAETSTARNAVFYGDKAIDRSPCGTGTSARMAQWYAQGRLKPGETFVHESIIGSIFNGRIEAETELANQPAIVPSIEGWARIHGYNHLILDEEDPYVFGFQVI.

Catalysis depends on Cys-91, which acts as the Proton acceptor. Residues 92–93 (GH), His-224, and Asp-250 each bind substrate. Catalysis depends on Cys-254, which acts as the Proton donor. 255-256 (GT) is a substrate binding site.

Belongs to the proline racemase family.

It catalyses the reaction trans-4-hydroxy-L-proline = cis-4-hydroxy-D-proline. Functionally, catalyzes the epimerization of trans-4-hydroxy-L-proline (t4LHyp) to cis-4-hydroxy-D-proline (c4DHyp). Is likely involved in a degradation pathway that converts t4LHyp to alpha-ketoglutarate. Displays no proline racemase activity. The protein is 4-hydroxyproline 2-epimerase of Spirosoma linguale (strain ATCC 33905 / DSM 74 / LMG 10896 / Claus 1).